Reading from the N-terminus, the 469-residue chain is Protein RUFY3 (469 aa).

Phosphothreonine is present on residues threonine 5 and threonine 12. Phosphoserine is present on residues tyrosine 27, serine 34, and serine 49. Threonine 51 is subject to Phosphothreonine. Aspartate 53 is subject to Phosphoserine. One can recognise an RUN domain in the interval 95–227 (DSDYAPLQQF…IDANFCMKGE (133 aa)). Coiled-coil stretches lie at residues 271 to 362 (NRHL…VEKE) and 422 to 463 (KSEL…AANK). Residues 321 to 337 (SYLLESNRKGPKQDRTA) are compositionally biased toward basic and acidic residues. Residues 321 to 342 (SYLLESNRKGPKQDRTAEGQAL) are disordered.

Interacts with PAK1. Interacts (via C-terminus) with Ras-related Rab-5 proteins. Interacts (via C-terminus) with Ras-related Rap-2 proteins. Interacts with PIK3CA and PIK3R1. Interacts (via N-terminus) with FSCN1; this interaction induces neuron axon development. Interacts with DBN1. Interacts (via the second coiled coil) with GTP-, but not GDP-bound ARL8A and ARL8B. Interacts with dynactin/DCTN1 and the dynein intermediate chain DYNC1I1/2. Directly interacts with DYNC1LI1. In terms of processing, phosphorylated by PAK1. Isoform 1 is partially phosphorylated. Expressed in brain (at protein level).

It is found in the cytoplasm. The protein resides in the endomembrane system. Its subcellular location is the cell projection. The protein localises to the invadopodium. It localises to the growth cone. It is found in the perikaryon. The protein resides in the filopodium. Its subcellular location is the lamellipodium. The protein localises to the lysosome. ARL8 effector that promotes the coupling of endolysosomes to dynein-dynactin for retrograde transport along microtubules. Acts by binding both GTP-bound ARL8 and dynein-dynactin. In nonneuronal cells, promotes concentration of endolysosomes in the juxtanuclear area. In hippocampal neurons, drives retrograde transport of endolysosomes from the axon to the soma. Plays a role in the generation of neuronal polarity formation and axon growth. Implicated in the formation of a single axon by developing neurons. May inhibit the formation of additional axons by inhibition of PI3K in minor neuronal processes. Plays a role in the formation of F-actin-enriched protrusive structures at the cell periphery. Plays a role in cytoskeletal organization by regulating the subcellular localization of FSCN1 and DBN1 at axonal growth cones. The protein is Protein RUFY3 of Mus musculus (Mouse).